We begin with the raw amino-acid sequence, 156 residues long: Hexachlorocyclohexane dehydrochlorinase 2 (156 aa).

Aspartate 25 is an active-site residue. Residue histidine 73 is the Proton acceptor of the active site.

It belongs to the HCH dehydrochlorinase family. In terms of assembly, homotrimer.

Its subcellular location is the periplasm. It carries out the reaction gamma-hexachlorocyclohexane = (3R,4S,5S,6R)-pentachlorocyclohexene + chloride + H(+). The enzyme catalyses (3R,4S,5S,6R)-pentachlorocyclohexene = (3R,6R)-1,3,4,6-tetrachlorocyclohexa-1,4-diene + chloride + H(+). Its pathway is xenobiotic degradation; hexachlorocyclohexane degradation. In terms of biological role, catalyzes the conversion of the important environmental pollutant gamma-hexachlorocyclohexane (gamma-HCH or lindane) to 1,3,4,6-tetrachloro-1,4-cyclohexadiene (1,4-TCDN) via gamma-pentachlorocyclohexene (gamma-PCCH). Proceeds by two successive 1,2-anti conformationally dependent dehydrochlorinations. Also shows activity with alpha- and delta-HCH, giving alpha- and delta-PCCH respectively, but not with the beta isomer. The polypeptide is Hexachlorocyclohexane dehydrochlorinase 2 (Sphingobium indicum (strain DSM 16412 / CCM 7286 / MTCC 6364 / B90A)).